A 226-amino-acid chain; its full sequence is Cytidylate kinase (226 aa).

10 to 18 (GPASSGKST) serves as a coordination point for ATP.

Belongs to the cytidylate kinase family. Type 1 subfamily.

It is found in the cytoplasm. The enzyme catalyses CMP + ATP = CDP + ADP. It catalyses the reaction dCMP + ATP = dCDP + ADP. In Streptococcus thermophilus (strain CNRZ 1066), this protein is Cytidylate kinase.